The chain runs to 520 residues: Cytosol aminopeptidase (520 aa).

Zn(2+) is bound by residues lysine 286 and aspartate 291. Lysine 298 is a catalytic residue. 3 residues coordinate Zn(2+): aspartate 309, aspartate 368, and glutamate 370. The active site involves arginine 372.

It belongs to the peptidase M17 family. In terms of assembly, homohexamer. Zn(2+) is required as a cofactor.

The protein localises to the cytoplasm. The catalysed reaction is Release of an N-terminal amino acid, Xaa-|-Yaa-, in which Xaa is preferably Leu, but may be other amino acids including Pro although not Arg or Lys, and Yaa may be Pro. Amino acid amides and methyl esters are also readily hydrolyzed, but rates on arylamides are exceedingly low.. It carries out the reaction Release of N-terminal proline from a peptide.. In terms of biological role, presumably involved in the processing and regular turnover of intracellular proteins. Catalyzes the removal of unsubstituted N-terminal amino acids from various peptides. This chain is Cytosol aminopeptidase (lap), found in Dictyostelium discoideum (Social amoeba).